We begin with the raw amino-acid sequence, 175 residues long: UPF0398 protein SPD_0338 (175 aa).

Belongs to the UPF0398 family.

The chain is UPF0398 protein SPD_0338 from Streptococcus pneumoniae serotype 2 (strain D39 / NCTC 7466).